Consider the following 265-residue polypeptide: 5'-nucleotidase SurE (265 aa).

4 residues coordinate a divalent metal cation: Asp-8, Asp-9, Ser-39, and Asn-96.

Belongs to the SurE nucleotidase family. Requires a divalent metal cation as cofactor.

It is found in the cytoplasm. It carries out the reaction a ribonucleoside 5'-phosphate + H2O = a ribonucleoside + phosphate. In terms of biological role, nucleotidase that shows phosphatase activity on nucleoside 5'-monophosphates. This Rubrobacter xylanophilus (strain DSM 9941 / JCM 11954 / NBRC 16129 / PRD-1) protein is 5'-nucleotidase SurE.